The sequence spans 492 residues: Phosphoenolpyruvate carboxylase (492 aa).

This sequence belongs to the PEPCase type 2 family. As to quaternary structure, homotetramer. Requires Mg(2+) as cofactor.

The catalysed reaction is oxaloacetate + phosphate = phosphoenolpyruvate + hydrogencarbonate. Catalyzes the irreversible beta-carboxylation of phosphoenolpyruvate (PEP) to form oxaloacetate (OAA), a four-carbon dicarboxylic acid source for the tricarboxylic acid cycle. This Halobacterium salinarum (strain ATCC 29341 / DSM 671 / R1) protein is Phosphoenolpyruvate carboxylase.